Consider the following 398-residue polypeptide: Phosphoglycerate kinase (398 aa).

Residues 24-26 (DFN), R39, 62-65 (HFGR), R121, and R154 contribute to the substrate site. Residues K205, G296, E327, and 354–357 (GGDS) contribute to the ATP site.

The protein belongs to the phosphoglycerate kinase family. As to quaternary structure, monomer.

It is found in the cytoplasm. The catalysed reaction is (2R)-3-phosphoglycerate + ATP = (2R)-3-phospho-glyceroyl phosphate + ADP. It participates in carbohydrate degradation; glycolysis; pyruvate from D-glyceraldehyde 3-phosphate: step 2/5. This chain is Phosphoglycerate kinase, found in Trichodesmium erythraeum (strain IMS101).